Consider the following 279-residue polypeptide: Large ribosomal subunit protein uL2 (279 aa).

A disordered region spans residues 223–279; sequence VAMNPIDHPHGGGEGRTSGGRHPVTPWGKGTKGTRTRSNKSTDKYILRSRHAKKKGR. Residues 269–279 show a composition bias toward basic residues; that stretch reads LRSRHAKKKGR.

It belongs to the universal ribosomal protein uL2 family. Part of the 50S ribosomal subunit. Forms a bridge to the 30S subunit in the 70S ribosome.

Its function is as follows. One of the primary rRNA binding proteins. Required for association of the 30S and 50S subunits to form the 70S ribosome, for tRNA binding and peptide bond formation. It has been suggested to have peptidyltransferase activity; this is somewhat controversial. Makes several contacts with the 16S rRNA in the 70S ribosome. The chain is Large ribosomal subunit protein uL2 from Paracoccus denitrificans (strain Pd 1222).